Consider the following 302-residue polypeptide: Nudix hydrolase 22, chloroplastic (302 aa).

The transit peptide at 1–25 directs the protein to the chloroplast; the sequence is MKSGASAASPTAKSFNFGSSRLLAL. Positions 73–229 constitute a Nudix hydrolase domain; it reads PKKAAVLICL…DSDYVIWGLT (157 aa). The Nudix box motif lies at 114–135; it reads KAEEHDKDDGITATREAEEEIG. The Mg(2+) site is built by glutamate 129 and glutamate 133.

Belongs to the Nudix hydrolase family. It depends on Mg(2+) as a cofactor. The cofactor is Mn(2+). Expressed in roots, leaves, stems and inflorescences.

The protein resides in the plastid. Its subcellular location is the chloroplast. Functionally, probably mediates the hydrolysis of some nucleoside diphosphate derivatives. This Arabidopsis thaliana (Mouse-ear cress) protein is Nudix hydrolase 22, chloroplastic (NUDT22).